We begin with the raw amino-acid sequence, 205 residues long: Histidine biosynthesis bifunctional protein HisIE (205 aa).

The phosphoribosyl-AMP cyclohydrolase stretch occupies residues 1 to 115 (MIDIKELKFD…DEETEDGIEI (115 aa)). The phosphoribosyl-ATP pyrophosphohydrolase stretch occupies residues 116–205 (LNKLYERIKG…YNELERRYKK (90 aa)).

This sequence in the N-terminal section; belongs to the PRA-CH family. It in the C-terminal section; belongs to the PRA-PH family.

Its subcellular location is the cytoplasm. It catalyses the reaction 1-(5-phospho-beta-D-ribosyl)-ATP + H2O = 1-(5-phospho-beta-D-ribosyl)-5'-AMP + diphosphate + H(+). It carries out the reaction 1-(5-phospho-beta-D-ribosyl)-5'-AMP + H2O = 1-(5-phospho-beta-D-ribosyl)-5-[(5-phospho-beta-D-ribosylamino)methylideneamino]imidazole-4-carboxamide. It participates in amino-acid biosynthesis; L-histidine biosynthesis; L-histidine from 5-phospho-alpha-D-ribose 1-diphosphate: step 2/9. It functions in the pathway amino-acid biosynthesis; L-histidine biosynthesis; L-histidine from 5-phospho-alpha-D-ribose 1-diphosphate: step 3/9. The polypeptide is Histidine biosynthesis bifunctional protein HisIE (Caldanaerobacter subterraneus subsp. tengcongensis (strain DSM 15242 / JCM 11007 / NBRC 100824 / MB4) (Thermoanaerobacter tengcongensis)).